The primary structure comprises 301 residues: 2-aminobenzoylacetyl-CoA thioesterase (301 aa).

Positions 69, 71, 73, 74, 159, 178, and 221 each coordinate Fe cation.

This sequence belongs to the metallo-beta-lactamase superfamily.

The enzyme catalyses (2-aminobenzoyl)acetyl-CoA + H2O = (2-aminobenzoyl)acetate + CoA + H(+). Thioesterase activity, but not pyocyanine production, is inhibited by 2-(pyridin-3-yl)benzoic acid, 2-(1H-pyrrol-1-yl)benzoic acid and 3-methylthiophene-2-carboxylic acid. Compounds bind to the active center. In terms of biological role, required for the biosynthesis of the quorum-sensing signaling molecules 2-heptyl-4(1H)-quinolone (HHQ) and 2-heptyl-3-hydroxy-4(1H)-quinolone (Pseudomonas quinolone signal or PQS), which are important for biofilm formation and virulence. Catalyzes the hydrolysis of the intermediate 2-aminobenzoylacetyl-CoA (2-ABA-CoA) to form 2-aminobenzoylacetate (2-ABA), the precursor of HHQ. In vitro, can also hydrolyze other substrates such as S-ethyl-acetothioacetate and acetoacetyl-CoA, but is inactive against anthraniloyl-CoA, malonyl-CoA and octanoyl-CoA. Beyond its thioesterase function, is involved in the regulation of diverse genes coding for key virulence determinants and biofilm development. This is 2-aminobenzoylacetyl-CoA thioesterase from Pseudomonas aeruginosa (strain ATCC 15692 / DSM 22644 / CIP 104116 / JCM 14847 / LMG 12228 / 1C / PRS 101 / PAO1).